Reading from the N-terminus, the 634-residue chain is Chaperone protein DnaK (634 aa).

Thr-193 bears the Phosphothreonine; by autocatalysis mark. Residues 597 to 634 (GNANNTSSTESTTTNNNNEEDSKVVDSDYQEIDKKDGK) are disordered. The span at 600-613 (NNTSSTESTTTNNN) shows a compositional bias: low complexity. A compositionally biased stretch (basic and acidic residues) spans 616-634 (EDSKVVDSDYQEIDKKDGK).

The protein belongs to the heat shock protein 70 family.

In terms of biological role, acts as a chaperone. The protein is Chaperone protein DnaK of Ehrlichia canis (strain Jake).